Reading from the N-terminus, the 469-residue chain is UDP-N-acetylmuramoylalanine--D-glutamate ligase (469 aa).

Gly-123–Thr-129 lines the ATP pocket.

Belongs to the MurCDEF family.

The protein resides in the cytoplasm. The enzyme catalyses UDP-N-acetyl-alpha-D-muramoyl-L-alanine + D-glutamate + ATP = UDP-N-acetyl-alpha-D-muramoyl-L-alanyl-D-glutamate + ADP + phosphate + H(+). It participates in cell wall biogenesis; peptidoglycan biosynthesis. Cell wall formation. Catalyzes the addition of glutamate to the nucleotide precursor UDP-N-acetylmuramoyl-L-alanine (UMA). The chain is UDP-N-acetylmuramoylalanine--D-glutamate ligase from Caulobacter sp. (strain K31).